Reading from the N-terminus, the 827-residue chain is Transcription factor SOX-6 (827 aa).

A compositionally biased stretch (polar residues) spans 1–10 (MSSKQATSPF). The tract at residues 1 to 51 (MSSKQATSPFACTADGEEAMTQDLTSREKEEGSDQHPASHLPLHPIMHNKP) is disordered. The segment covering 25–34 (TSREKEEGSD) has biased composition (basic and acidic residues). A Phosphothreonine modification is found at threonine 119. The stretch at 184 to 262 (LAEKERQLST…LLQQQIQVQG (79 aa)) forms a coiled coil. 2 disordered regions span residues 334-361 (QINPRLKGISDRFGRNLDPSEHGGGHSY) and 379-470 (VSPG…PIGG). Positions 341 to 357 (GISDRFGRNLDPSEHGG) are enriched in basic and acidic residues. At serine 399 the chain carries Phosphoserine. A Phosphothreonine modification is found at threonine 401. Glycyl lysine isopeptide (Lys-Gly) (interchain with G-Cter in SUMO) cross-links involve residues lysine 404 and lysine 417. Composition is skewed to polar residues over residues 421–431 (TAQPLNLSSRP) and 439–461 (SPTSPTQNLFPASKTSPVNLPNK). A phosphoserine mark is found at serine 439 and serine 442. Positions 620–688 (IKRPMNAFMV…IHLEKYPNYK (69 aa)) form a DNA-binding region, HMG box. Disordered regions lie at residues 752-772 (TPSPQMTSDCSSTSASPEPSL) and 786-827 (ASLA…VSAN). Over residues 795–808 (NGEDEMEAYDDYED) the composition is skewed to acidic residues.

Homodimer. Interacts with DAZAP2. May interact with CENPK. Sumoylation inhibits the transcriptional activity. As to expression, highly expressed in testis.

Its subcellular location is the nucleus. It is found in the cytoplasm. Its function is as follows. Transcription factor that plays a key role in several developmental processes, including neurogenesis, chondrocytes differentiation and cartilage formation. Specifically binds the 5'-AACAAT-3' DNA motif present in enhancers and super-enhancers and promotes expression of genes important for chondrogenesis. Required for overt chondrogenesis when condensed prechondrocytes differentiate into early stage chondrocytes: SOX5 and SOX6 cooperatively bind with SOX9 on active enhancers and super-enhancers associated with cartilage-specific genes, and thereby potentiate SOX9's ability to transactivate. Not involved in precartilaginous condensation, the first step in chondrogenesis, during which skeletal progenitors differentiate into prechondrocytes. Together with SOX5, required to form and maintain a pool of highly proliferating chondroblasts between epiphyses and metaphyses, to form columnar chondroblasts, delay chondrocyte prehypertrophy but promote hypertrophy, and to delay terminal differentiation of chondrocytes on contact with ossification fronts. Binds to the proximal promoter region of the myelin protein MPZ gene, and is thereby involved in the differentiation of oligodendroglia in the developing spinal tube. Binds to the gene promoter of MBP and acts as a transcriptional repressor. This is Transcription factor SOX-6 from Mus musculus (Mouse).